A 340-amino-acid chain; its full sequence is MSTDKITFLLNWQPTPYHIPIFLAQTKGYFKEQGLDIAILEPTNPSDVTELIGSGKVDMGLKAMIHTLAAKARGFPVTSVASLLDEPFTGVLYLKGSGITEDFQSLKGKKIGYVGEFGKIQIDELTKHYGMKPEDYTAVRCGMNVAKYIIEGKIDAGIGIECMQQVELEEYLAKQGRPASDAKMLRIDKLACLGCCCFCTVLYICNDEFLKKNPEKVRKFLKAIKKATDYVLADPVKAWKEYIDFKPQLNNDLSYKQYQRCYAYFSSSLYNVHRDWKKVTGYGKRLAILPPDYVSNYTNEYLSWPEPEEVSDPLEAQRLMAIHQEKCRQEGTFKRLALPA.

K62 bears the N6-(pyridoxal phosphate)lysine mark. H66 is a catalytic residue. Position 115–118 (115–118 (GEFG)) interacts with pyridoxal 5'-phosphate. The CCCFC; essential for catalytic activity, may be the site of iron coordination signature appears at 195–199 (CCCFC).

It belongs to the NMT1/THI5 family. Homodimer. The cofactor is Fe cation.

The catalysed reaction is N(6)-(pyridoxal phosphate)-L-lysyl-[4-amino-5-hydroxymethyl-2-methylpyrimidine phosphate synthase] + L-histidyl-[4-amino-5-hydroxymethyl-2-methylpyrimidine phosphate synthase] + 2 Fe(3+) + 4 H2O = L-lysyl-[4-amino-5-hydroxymethyl-2-methylpyrimidine phosphate synthase] + (2S)-2-amino-5-hydroxy-4-oxopentanoyl-[4-amino-5-hydroxymethyl-2-methylpyrimidine phosphate synthase] + 4-amino-2-methyl-5-(phosphooxymethyl)pyrimidine + 3-oxopropanoate + 2 Fe(2+) + 2 H(+). It functions in the pathway cofactor biosynthesis; thiamine diphosphate biosynthesis. Its function is as follows. Responsible for the formation of the pyrimidine heterocycle in the thiamine biosynthesis pathway. Catalyzes the formation of hydroxymethylpyrimidine phosphate (HMP-P) from histidine and pyridoxal phosphate (PLP). The protein uses PLP and the active site histidine to form HMP-P, generating an inactive enzyme. The enzyme can only undergo a single turnover, which suggests it is a suicide enzyme. The protein is 4-amino-5-hydroxymethyl-2-methylpyrimidine phosphate synthase THI13 of Saccharomyces cerevisiae (strain ATCC 204508 / S288c) (Baker's yeast).